The sequence spans 136 residues: Protein NrdI (136 aa).

It belongs to the NrdI family.

Probably involved in ribonucleotide reductase function. The chain is Protein NrdI from Salmonella paratyphi A (strain ATCC 9150 / SARB42).